Reading from the N-terminus, the 176-residue chain is Lipoprotein signal peptidase (176 aa).

Helical transmembrane passes span 12–32 (WYWMVVLVFIADQLSKQWVLA), 67–87 (WQRWFFTFVAVGFSTLLTIWL), and 94–116 (MWRLNLAYTLVIGGALGNLIDRL). Catalysis depends on residues aspartate 123 and aspartate 141. The chain crosses the membrane as a helical span at residues 137 to 157 (FNIADSAICVGAALIIIDSII).

The protein belongs to the peptidase A8 family.

It is found in the cell inner membrane. The catalysed reaction is Release of signal peptides from bacterial membrane prolipoproteins. Hydrolyzes -Xaa-Yaa-Zaa-|-(S,diacylglyceryl)Cys-, in which Xaa is hydrophobic (preferably Leu), and Yaa (Ala or Ser) and Zaa (Gly or Ala) have small, neutral side chains.. It participates in protein modification; lipoprotein biosynthesis (signal peptide cleavage). This protein specifically catalyzes the removal of signal peptides from prolipoproteins. This is Lipoprotein signal peptidase from Shewanella woodyi (strain ATCC 51908 / MS32).